Reading from the N-terminus, the 254-residue chain is 3-oxo-5-alpha-steroid 4-dehydrogenase 2 (254 aa).

4 consecutive transmembrane segments (helical) span residues 8–28, 72–92, 146–166, and 206–226; these read SPVL…LYVA, PLSL…VHYF, FCLG…SDYI, and LATW…FLGL.

It belongs to the steroid 5-alpha reductase family.

It localises to the microsome membrane. The protein localises to the endoplasmic reticulum membrane. The enzyme catalyses a 3-oxo-5alpha-steroid + NADP(+) = a 3-oxo-Delta(4)-steroid + NADPH + H(+). It carries out the reaction 17beta-hydroxy-5alpha-androstan-3-one + NADP(+) = testosterone + NADPH + H(+). The catalysed reaction is 5alpha-pregnane-3,20-dione + NADP(+) = progesterone + NADPH + H(+). Its function is as follows. Converts testosterone (T) into 5-alpha-dihydrotestosterone (DHT) and progesterone or corticosterone into their corresponding 5-alpha-3-oxosteroids. It plays a central role in sexual differentiation and androgen physiology. The sequence is that of 3-oxo-5-alpha-steroid 4-dehydrogenase 2 (SRD5A2) from Macaca fascicularis (Crab-eating macaque).